The following is a 113-amino-acid chain: MPQPDSVKARLAALDRIDDELCAVLQHAQATIGALAELKRGHAALQPQLEQHVRDYYRTLEHSTVALRNEIRELDAAVGTQLLPVNIGKRAVGQDQEKLSEQLAQMDKYVGSM.

Belongs to the Mediator complex subunit 11 family. In terms of assembly, component of the Mediator complex.

It localises to the nucleus. Its function is as follows. Component of the Mediator complex, a coactivator involved in the regulated transcription of nearly all RNA polymerase II-dependent genes. Mediator functions as a bridge to convey information from gene-specific regulatory proteins to the basal RNA polymerase II transcription machinery. Mediator is recruited to promoters by direct interactions with regulatory proteins and serves as a scaffold for the assembly of a functional pre-initiation complex with RNA polymerase II and the general transcription factors. This Eremothecium gossypii (strain ATCC 10895 / CBS 109.51 / FGSC 9923 / NRRL Y-1056) (Yeast) protein is Mediator of RNA polymerase II transcription subunit 11 (MED11).